The chain runs to 1070 residues: Granule associated Rac and RHOG effector protein 1 (1070 aa).

Disordered regions lie at residues 681 to 771 (EQKA…VGAG), 855 to 992 (SQAM…STLP), and 1032 to 1070 (SYVQ…LPQY). Over residues 692–702 (PSLPVPPPPRA) the composition is skewed to pro residues. Composition is skewed to low complexity over residues 719-742 (PQQQ…QPIG), 906-924 (AQGD…NGDS), and 951-962 (TSTLPSPPLLTT). Ser-723 is subject to Phosphoserine. Positions 977-992 (PKAPWQHPSPLPSTLP) are enriched in pro residues. The span at 1046–1058 (HKAAPKGFKAFPG) shows a compositional bias: low complexity.

As to quaternary structure, interacts with AGO2 and TNRC6A.

The protein resides in the cytoplasm. It is found in the P-body. In terms of biological role, acts as an effector of RAC1. Associates with CCR4-NOT complex which is one of the major cellular mRNA deadenylases and is linked to various cellular processes including bulk mRNA degradation, miRNA-mediated repression, translational repression during translational initiation and general transcription regulation. May also play a role in miRNA silencing machinery. This chain is Granule associated Rac and RHOG effector protein 1, found in Homo sapiens (Human).